A 340-amino-acid chain; its full sequence is Melanin-concentrating hormone receptor 2 (340 aa).

Residues 1-34 are Extracellular-facing; that stretch reads MNPFHSSCWNTSAELSNKSWNKEFAYQTASAVDT. N10 and N17 each carry an N-linked (GlcNAc...) asparagine glycan. The chain crosses the membrane as a helical span at residues 35–57; it reads VILPSMIGIICSTGLVGNILIVF. At 58-69 the chain is on the cytoplasmic side; that stretch reads TIIRSRKKTVPD. The chain crosses the membrane as a helical span at residues 70 to 92; the sequence is IYICNLAVADLVHIIGMPFLIHQ. Over 93 to 106 the chain is Extracellular; sequence WARGGEWVFGGPLC. Residues 107-129 form a helical membrane-spanning segment; the sequence is TIITSLDTCNQFACSAIMTVMSV. The Cytoplasmic portion of the chain corresponds to 130–149; that stretch reads DRYFALVQPFRLTSWRTRYK. Residues 150-172 traverse the membrane as a helical segment; that stretch reads TIRINLGLWAASFILALPVWIYS. Residues 173–198 lie on the Extracellular side of the membrane; sequence KVIKFKDGVESCAFDLTSPDDVLWYT. The chain crosses the membrane as a helical span at residues 199–221; sequence LYLTITTFFFPLPLILVCYILIL. At 222–252 the chain is on the cytoplasmic side; sequence CYTWEMYQQNKDARCCNPSVPKQRVMKLTKM. The chain crosses the membrane as a helical span at residues 253–272; sequence VLVLVAVFILSAAPYHVIQL. The Extracellular segment spans residues 273 to 286; it reads VNLQMEQPTLAFYV. Residues 287–309 traverse the membrane as a helical segment; the sequence is GYYLSICLSYASSSINPFLYILL. At 310–340 the chain is on the cytoplasmic side; it reads SGNFQKRLPQIQRRVTDKEIKNMGNTLKSHF.

The protein belongs to the G-protein coupled receptor 1 family.

The protein localises to the cell membrane. Functionally, receptor for melanin-concentrating hormone, coupled to G proteins that activate phosphoinositide hydrolysis. In Macaca fascicularis (Crab-eating macaque), this protein is Melanin-concentrating hormone receptor 2 (MCHR2).